A 338-amino-acid chain; its full sequence is tRNA N6-adenosine threonylcarbamoyltransferase (338 aa).

Fe cation is bound by residues His-109 and His-113. Residues 132-136 (AISGA), Asp-165, Gly-178, and Asn-277 each bind substrate. Residue Asp-302 coordinates Fe cation.

This sequence belongs to the KAE1 / TsaD family. It depends on Fe(2+) as a cofactor.

The protein resides in the cytoplasm. It catalyses the reaction L-threonylcarbamoyladenylate + adenosine(37) in tRNA = N(6)-L-threonylcarbamoyladenosine(37) in tRNA + AMP + H(+). Functionally, required for the formation of a threonylcarbamoyl group on adenosine at position 37 (t(6)A37) in tRNAs that read codons beginning with adenine. Is involved in the transfer of the threonylcarbamoyl moiety of threonylcarbamoyl-AMP (TC-AMP) to the N6 group of A37, together with TsaE and TsaB. TsaD likely plays a direct catalytic role in this reaction. The polypeptide is tRNA N6-adenosine threonylcarbamoyltransferase (Chlamydia trachomatis serovar L2b (strain UCH-1/proctitis)).